The primary structure comprises 453 residues: UDP-N-acetylmuramoylalanine--D-glutamate ligase (453 aa).

Gly120–Thr126 is a binding site for ATP.

Belongs to the MurCDEF family.

It localises to the cytoplasm. It catalyses the reaction UDP-N-acetyl-alpha-D-muramoyl-L-alanine + D-glutamate + ATP = UDP-N-acetyl-alpha-D-muramoyl-L-alanyl-D-glutamate + ADP + phosphate + H(+). Its pathway is cell wall biogenesis; peptidoglycan biosynthesis. In terms of biological role, cell wall formation. Catalyzes the addition of glutamate to the nucleotide precursor UDP-N-acetylmuramoyl-L-alanine (UMA). The protein is UDP-N-acetylmuramoylalanine--D-glutamate ligase of Nitrosococcus oceani (strain ATCC 19707 / BCRC 17464 / JCM 30415 / NCIMB 11848 / C-107).